Reading from the N-terminus, the 327-residue chain is Cobalamin biosynthesis protein CobD (327 aa).

4 consecutive transmembrane segments (helical) span residues 61 to 78, 80 to 102, 160 to 182, and 300 to 322; these read MWLTVGLVAACIFAGLVI, SILPHAGTAGAIVEVVIVAILLA, GIVAPAFWFLVGGLPGLFAYKLI, and AALVLFWSTMSLMTGLVIAASLV.

Belongs to the CobD/CbiB family.

The protein resides in the cell membrane. It functions in the pathway cofactor biosynthesis; adenosylcobalamin biosynthesis. Its function is as follows. Converts cobyric acid to cobinamide by the addition of aminopropanol on the F carboxylic group. The sequence is that of Cobalamin biosynthesis protein CobD from Brucella suis biovar 1 (strain 1330).